Consider the following 485-residue polypeptide: MTTVDNRQDFKVADLSLAAFGRKEITLAEHEMPGLMAIRKEYAEAQPLAGARVTGSLHMTVQTAVLIETLVALGAEVRWASCNIFSTQDHAAAAIAVGPNGTPDNPQGVPVFAWKGETLEEYWWCTEQALTWPNTPTGGPNMILDDGGDATLLVHKGVEYEKDGKVPSVDTAESDEHRVILELLTRTVGESPQKWTQLASEIRGVTEETTTGVHRLYEMHRDGTLLFPAINVNDAVTKSKFDNKYGCRHSLIDGINRATDVLIGGKTAVVCGYGDVGKGCAESLRGQGARVIITEIDPICALQAAMDGFQVTTLDEVVDKADIFVTTTGNKDIIMAKDMAKMKHQAIVGNIGHFDNEIDMAGLAQTPGIVKDEVKPQVHTWTYPDGKVLIVLSEGRLLNLGNATGHPSFVMSNSFADQTLAQIELFTKPDEYPTDVYVLPKHLDEKVARLHLDSLGVKLTTLRPEQADYIGVKVEGPYKADHYRY.

The substrate site is built by T60, D146, and E208. T209–T211 lines the NAD(+) pocket. Substrate contacts are provided by K238 and D242. NAD(+)-binding positions include N243, G272–G277, E295, N330, I351–H353, and N399.

The protein belongs to the adenosylhomocysteinase family. NAD(+) serves as cofactor.

It is found in the cytoplasm. The catalysed reaction is S-adenosyl-L-homocysteine + H2O = L-homocysteine + adenosine. Its pathway is amino-acid biosynthesis; L-homocysteine biosynthesis; L-homocysteine from S-adenosyl-L-homocysteine: step 1/1. Functionally, may play a key role in the regulation of the intracellular concentration of adenosylhomocysteine. This is Adenosylhomocysteinase from Streptomyces coelicolor (strain ATCC BAA-471 / A3(2) / M145).